Consider the following 200-residue polypeptide: Glycerol-3-phosphate acyltransferase (200 aa).

Helical transmembrane passes span 8 to 28, 57 to 77, 88 to 108, 114 to 134, and 159 to 179; these read ALALWGVIGYLLGSIPFGMVL, LAAALTLVLDGGKGVVAVLAA, IAGLMAMIGHCYPVWLRFAGG, FLGIVLALAFPVGVGCCLAWL, and FLLGFPGAVVLLILLGALIFW.

Belongs to the PlsY family. Probably interacts with PlsX.

The protein localises to the cell inner membrane. It catalyses the reaction an acyl phosphate + sn-glycerol 3-phosphate = a 1-acyl-sn-glycero-3-phosphate + phosphate. Its pathway is lipid metabolism; phospholipid metabolism. In terms of biological role, catalyzes the transfer of an acyl group from acyl-phosphate (acyl-PO(4)) to glycerol-3-phosphate (G3P) to form lysophosphatidic acid (LPA). This enzyme utilizes acyl-phosphate as fatty acyl donor, but not acyl-CoA or acyl-ACP. The sequence is that of Glycerol-3-phosphate acyltransferase from Roseobacter denitrificans (strain ATCC 33942 / OCh 114) (Erythrobacter sp. (strain OCh 114)).